Reading from the N-terminus, the 266-residue chain is Chymotrypsin-like elastase family member 1 (266 aa).

The N-terminal stretch at 1-16 is a signal peptide; sequence MLRLLVFTSLVLYGHS. Residues 17-26 constitute a propeptide, activation peptide; the sequence is TQDFPETNAR. A Peptidase S1 domain is found at 27-264; that stretch reads VVGGTAVSKN…YISWINNAIA (238 aa). Residues Cys56 and Cys72 are joined by a disulfide bond. Catalysis depends on His71, which acts as the Charge relay system. Positions 85, 87, 90, and 95 each coordinate Ca(2+). Asn87 carries an N-linked (GlcNAc...) asparagine glycan. Asp119 serves as the catalytic Charge relay system. 3 disulfides stabilise this stretch: Cys153–Cys220, Cys184–Cys200, and Cys210–Cys240. The Charge relay system role is filled by Ser214. An N-linked (GlcNAc...) asparagine glycan is attached at Asn241.

It belongs to the peptidase S1 family. Elastase subfamily. Ca(2+) is required as a cofactor. Pancreas.

The protein resides in the secreted. The enzyme catalyses Hydrolysis of proteins, including elastin. Preferential cleavage: Ala-|-Xaa.. Its function is as follows. Serine proteases that hydrolyze many proteins in addition to elastin. This is Chymotrypsin-like elastase family member 1 (CELA1) from Bos taurus (Bovine).